We begin with the raw amino-acid sequence, 212 residues long: LexA repressor (212 aa).

A DNA-binding region (H-T-H motif) is located at residues 26 to 46 (VREIGEAVGLSSTSTVHGHID). Catalysis depends on for autocatalytic cleavage activity residues serine 128 and lysine 171.

Belongs to the peptidase S24 family. In terms of assembly, homodimer.

The catalysed reaction is Hydrolysis of Ala-|-Gly bond in repressor LexA.. In terms of biological role, represses a number of genes involved in the response to DNA damage (SOS response), including recA and lexA. In the presence of single-stranded DNA, RecA interacts with LexA causing an autocatalytic cleavage which disrupts the DNA-binding part of LexA, leading to derepression of the SOS regulon and eventually DNA repair. In Oenococcus oeni (strain ATCC BAA-331 / PSU-1), this protein is LexA repressor.